Here is a 254-residue protein sequence, read N- to C-terminus: 5'-methylthioadenosine/S-adenosylhomocysteine nucleosidase (254 aa).

M1 is modified (N-acetylmethionine). The Proton acceptor role is filled by E25. Residues T103 and 186–189 (KDME) contribute to the S-methyl-5'-thioadenosine site. K186 and D212 together coordinate adenine. The active-site Proton donor is D212.

The protein belongs to the PNP/UDP phosphorylase family. MtnN subfamily. In terms of assembly, homodimer.

It catalyses the reaction S-methyl-5'-thioadenosine + H2O = 5-(methylsulfanyl)-D-ribose + adenine. It carries out the reaction S-adenosyl-L-homocysteine + H2O = S-(5-deoxy-D-ribos-5-yl)-L-homocysteine + adenine. The enzyme catalyses 5'-deoxyadenosine + H2O = 5-deoxy-D-ribose + adenine. Its pathway is amino-acid biosynthesis; L-methionine biosynthesis via salvage pathway; S-methyl-5-thio-alpha-D-ribose 1-phosphate from S-methyl-5'-thioadenosine (hydrolase route): step 1/2. Its function is as follows. Enzyme of the methionine cycle that catalyzes the irreversible cleavage of the glycosidic bond in 5'-methylthioadenosine (MTA) and S-adenosylhomocysteine (SAH/AdoHcy) to a lesser extent, to adenine and the corresponding thioribose, 5'-methylthioribose and S-ribosylhomocysteine, respectively. Contributes to the maintenance of AdoMet homeostasis and is required to sustain high rates of ethylene synthesis. This chain is 5'-methylthioadenosine/S-adenosylhomocysteine nucleosidase (MTN2), found in Arabidopsis thaliana (Mouse-ear cress).